A 238-amino-acid polypeptide reads, in one-letter code: ATP synthase subunit a (238 aa).

A run of 5 helical transmembrane segments spans residues 18–38 (LTIL…VFWA), 75–95 (YSLL…LGLM), 112–132 (NFGV…IEGI), 179–199 (VVTG…PLAF), and 203–223 (IVWT…FIIL).

This sequence belongs to the ATPase A chain family. As to quaternary structure, F-type ATPases have 2 components, CF(1) - the catalytic core - and CF(0) - the membrane proton channel. CF(1) has five subunits: alpha(3), beta(3), gamma(1), delta(1), epsilon(1). CF(0) has three main subunits: a(1), b(2) and c(9-12). The alpha and beta chains form an alternating ring which encloses part of the gamma chain. CF(1) is attached to CF(0) by a central stalk formed by the gamma and epsilon chains, while a peripheral stalk is formed by the delta and b chains.

The protein resides in the cell membrane. Its function is as follows. Key component of the proton channel; it plays a direct role in the translocation of protons across the membrane. This Streptococcus agalactiae serotype III (strain NEM316) protein is ATP synthase subunit a.